We begin with the raw amino-acid sequence, 2341 residues long: Pecanex-like protein 1 (2341 aa).

The next 2 helical transmembrane spans lie at 28 to 50 (ATFV…FTLY) and 57 to 74 (MIIV…FIVL). The tract at residues 98–163 (FTDQRTKAEQ…SNQIGSGSSR (66 aa)) is disordered. A glycan (N-linked (GlcNAc...) asparagine) is linked at N109. A compositionally biased stretch (polar residues) spans 143–163 (SSRNSYAGLDPSNQIGSGSSR). A glycan (N-linked (GlcNAc...) asparagine) is linked at N215. 3 disordered regions span residues 270–294 (HSHS…VAFP), 311–331 (DPVS…SLVE), and 344–689 (DLKI…TRAR). The segment covering 272-282 (HSYRKDHRPRG) has biased composition (basic residues). Polar residues-rich tracts occupy residues 320-331 (KPLSGSKESLVE) and 347-356 (INTSQPPTKS). N348 carries N-linked (GlcNAc...) asparagine glycosylation. The span at 370–388 (SLRSLSTRSSGSTESYCSG) shows a compositional bias: low complexity. A glycan (N-linked (GlcNAc...) asparagine) is linked at N394. Over residues 394–404 (NSTVSSYKSEQ) the composition is skewed to polar residues. Basic and acidic residues-rich tracts occupy residues 430-455 (KKEC…EKIA), 465-478 (HEAK…EMHN), and 527-544 (SKVR…DVRP). Residues 554 to 569 (ASAHKSGRRRTGKKRA) show a composition bias toward basic residues. A compositionally biased stretch (low complexity) spans 605-635 (QSDLSRASSVQSAHQFSSDSSSSTTSHSCQS). N-linked (GlcNAc...) asparagine glycosylation is present at N702. Residues 756–834 (QVAFPEGEEQ…STAQVKVQSR (79 aa)) form a disordered region. A compositionally biased stretch (low complexity) spans 814 to 832 (LSLQDGQQGQQSTAQVKVQ). N-linked (GlcNAc...) asparagine glycosylation is found at N852 and N863. A run of 3 helical transmembrane segments spans residues 1003-1025 (ILEN…ILLI), 1032-1049 (IWVF…YSLL), and 1067-1089 (IAYS…DYGS). A glycan (N-linked (GlcNAc...) asparagine) is linked at N1091. The chain crosses the membrane as a helical span at residues 1110–1132 (FISARDLVIVFTLCFPIVFFIGL). An N-linked (GlcNAc...) asparagine glycan is attached at N1155. A run of 4 helical transmembrane segments spans residues 1160–1182 (LLAA…GLCY), 1194–1213 (IPVL…YHLS), 1266–1288 (LVVC…FTVL), and 1295–1312 (VLYT…YVLP). N1579, N1720, N1982, N2062, and N2072 each carry an N-linked (GlcNAc...) asparagine glycan. Disordered stretches follow at residues 2062–2120 (NATT…SPAR) and 2217–2237 (GQSS…NNSH). 3 stretches are compositionally biased toward polar residues: residues 2069–2078 (PHSNVTQGSI), 2096–2114 (YPPT…SGLV), and 2217–2236 (GQSS…ANNS). N-linked (GlcNAc...) asparagine glycosylation is found at N2234 and N2260.

This sequence belongs to the pecanex family.

The protein localises to the membrane. In Homo sapiens (Human), this protein is Pecanex-like protein 1.